Here is a 70-residue protein sequence, read N- to C-terminus: Small ribosomal subunit protein bS21B (70 aa).

Residues 37–70 (SYEKPTTERKRKKAAAVARLRKQVRRSMPPKKKY) are disordered. Residues 45-70 (RKRKKAAAVARLRKQVRRSMPPKKKY) are compositionally biased toward basic residues.

It belongs to the bacterial ribosomal protein bS21 family.

This is Small ribosomal subunit protein bS21B from Burkholderia pseudomallei (strain K96243).